The sequence spans 188 residues: MNIIRKLKPGTISLVLGPMFAGKTTFLIHCIYMLERLEKKVVFIKSTKNTRDKTIKTHSGIQLQSKQCEIIESTQLSDVGSLTDIHAVVIDEAHFFDDLIKCRAWADEEKIIILAGLNASFEQKMFQPIVHIFPYCSWIKYIGRTCMKCNRHNACFNVRKNADKTLILAGGSELYVTCCNNCLKKQMY.

ATP is bound at residue Gly17–Thr24. Glu92 serves as the catalytic Proton acceptor. Phe121 is a binding site for substrate. Positions 146 and 149 each coordinate Zn(2+). Leu166–Gly170 contributes to the substrate binding site. Cys179 and Cys182 together coordinate Zn(2+).

The protein belongs to the thymidine kinase family.

The enzyme catalyses thymidine + ATP = dTMP + ADP + H(+). Phosphorylates thymidine. ASFV replicates in the cytoplasm of infected cells and contains genes encoding a number of enzymes needed for DNA synthesis, including thymidine kinase. Important for growth in swine macrophages in vitro and is a virus virulence factor in swine. The polypeptide is Thymidine kinase (Ornithodoros (relapsing fever ticks)).